The following is a 154-amino-acid chain: Nuclear cap-binding protein subunit 2 (154 aa).

Residues Y10, Y33, 102-106 (RVDWD), 113-117 (RQYGR), and 123-124 (QV) contribute to the mRNA site. Residues 30 to 108 (CTLYVGNLSF…RLIRVDWDAG (79 aa)) form the RRM domain.

Belongs to the RRM NCBP2 family. Component of the nuclear cap-binding complex (CBC), a heterodimer composed of Cbp80 and Cbp20 that interacts with m7GpppG-capped RNA. Interacts with Ars2.

It is found in the nucleus. In terms of biological role, component of the cap-binding complex (CBC), which binds co-transcriptionally to the 5' cap of pre-mRNAs and is involved in various processes such as pre-mRNA splicing and RNA-mediated gene silencing (RNAi). The CBC complex is involved in miRNA-mediated RNA interference via its interaction with Ars2 and is required for primary microRNAs (miRNAs) processing. Also involved in innate immunity via the short interfering RNAs (siRNAs) processing machinery by restricting the viral RNA production. In the CBC complex, Cbp20 recognizes and binds capped RNAs (m7GpppG-capped RNA) but requires Cbp80 to stabilize the movement of its N-terminal loop and lock the CBC into a high affinity cap-binding state with the cap structure. In Drosophila yakuba (Fruit fly), this protein is Nuclear cap-binding protein subunit 2 (Cbp20).